The chain runs to 426 residues: Enolase 1 (426 aa).

(2R)-2-phosphoglycerate is bound at residue glutamine 163. Glutamate 205 functions as the Proton donor in the catalytic mechanism. Positions 242, 283, and 310 each coordinate Mg(2+). Residues lysine 335, arginine 364, serine 365, and lysine 386 each contribute to the (2R)-2-phosphoglycerate site. Lysine 335 functions as the Proton acceptor in the catalytic mechanism.

Belongs to the enolase family. The cofactor is Mg(2+).

It localises to the cytoplasm. Its subcellular location is the secreted. The protein resides in the cell surface. The enzyme catalyses (2R)-2-phosphoglycerate = phosphoenolpyruvate + H2O. It participates in carbohydrate degradation; glycolysis; pyruvate from D-glyceraldehyde 3-phosphate: step 4/5. Functionally, catalyzes the reversible conversion of 2-phosphoglycerate (2-PG) into phosphoenolpyruvate (PEP). It is essential for the degradation of carbohydrates via glycolysis. This is Enolase 1 from Streptomyces coelicolor (strain ATCC BAA-471 / A3(2) / M145).